Reading from the N-terminus, the 121-residue chain is Piercer of microtubule wall 2 protein (121 aa).

Basic and acidic residues predominate over residues methionine 1 to serine 10. A disordered region spans residues methionine 1–valine 29.

This sequence belongs to the PIERCE2 family. As to quaternary structure, microtubule inner protein component of sperm flagellar doublet microtubules. Interacts with CFAP53, ODAD1 and ODAD3; the interactions link the outer dynein arms docking complex (ODA-DC) to the internal microtubule inner proteins (MIP) in cilium axoneme. Expressed in airway epithelial cells.

Its subcellular location is the cytoplasm. The protein localises to the cytoskeleton. It localises to the cilium axoneme. The protein resides in the flagellum axoneme. In terms of biological role, microtubule inner protein involved in the attachment of outer dynein arms (ODAs) to dynein-decorated doublet microtubules (DMTs) in cilia axoneme, which is required for motile cilia beating. The chain is Piercer of microtubule wall 2 protein from Homo sapiens (Human).